The primary structure comprises 342 residues: Dihydroorotase (342 aa).

Histidine 13 and histidine 15 together coordinate Zn(2+). Substrate is bound by residues 15–17 and asparagine 41; that span reads HLR. 3 residues coordinate Zn(2+): lysine 98, histidine 135, and histidine 173. Lysine 98 carries the N6-carboxylysine modification. Histidine 135 lines the substrate pocket. Substrate is bound at residue leucine 218. Zn(2+) is bound at residue aspartate 246. Aspartate 246 is a catalytic residue. Substrate contacts are provided by histidine 250 and alanine 262.

It belongs to the metallo-dependent hydrolases superfamily. DHOase family. Class II DHOase subfamily. As to quaternary structure, homodimer. The cofactor is Zn(2+).

It catalyses the reaction (S)-dihydroorotate + H2O = N-carbamoyl-L-aspartate + H(+). It participates in pyrimidine metabolism; UMP biosynthesis via de novo pathway; (S)-dihydroorotate from bicarbonate: step 3/3. Functionally, catalyzes the reversible cyclization of carbamoyl aspartate to dihydroorotate. The polypeptide is Dihydroorotase (Aliivibrio fischeri (strain MJ11) (Vibrio fischeri)).